An 811-amino-acid polypeptide reads, in one-letter code: Endothelin-converting enzyme 2 (811 aa).

The Cytoplasmic portion of the chain corresponds to M1–E106. A disordered region spans residues L22–R64. Residues L107 to L127 form a helical; Signal-anchor for type II membrane protein membrane-spanning segment. Residues G128–W811 lie on the Lumenal side of the membrane. The 673-residue stretch at T139–W811 folds into the Peptidase M13 domain. 5 disulfide bridges follow: C140/C145, C163/C796, C171/C756, C227/C476, and C685/C808. Residues N207, N211, N252, N312, N357, N424, and N580 are each glycosylated (N-linked (GlcNAc...) asparagine). H648 is a Zn(2+) binding site. E649 is a catalytic residue. Residue H652 participates in Zn(2+) binding. N-linked (GlcNAc...) asparagine glycosylation is found at N673 and N681. A Zn(2+)-binding site is contributed by E708. Residue D712 is the Proton donor of the active site.

This sequence belongs to the peptidase M13 family. Requires Zn(2+) as cofactor.

It localises to the golgi apparatus membrane. It is found in the cytoplasmic vesicle. The protein resides in the secretory vesicle membrane. It carries out the reaction Hydrolysis of the 21-Trp-|-Val-22 bond in big endothelin to form endothelin 1.. Its function is as follows. Converts big endothelin-1 to endothelin-1. Also involved in the processing of various neuroendocrine peptides, including neurotensin, angiotensin I, substance P, proenkephalin-derived peptides, and prodynorphin-derived peptides. May play a role in amyloid-beta processing. This chain is Endothelin-converting enzyme 2, found in Homo sapiens (Human).